The primary structure comprises 292 residues: NAD kinase (292 aa).

The active-site Proton acceptor is Asp-73. NAD(+)-binding positions include 73 to 74, 147 to 148, His-158, Arg-175, Asp-177, 188 to 193, and Gln-247; these read DG, NE, and TAYSLS.

This sequence belongs to the NAD kinase family. A divalent metal cation serves as cofactor.

Its subcellular location is the cytoplasm. The catalysed reaction is NAD(+) + ATP = ADP + NADP(+) + H(+). Functionally, involved in the regulation of the intracellular balance of NAD and NADP, and is a key enzyme in the biosynthesis of NADP. Catalyzes specifically the phosphorylation on 2'-hydroxyl of the adenosine moiety of NAD to yield NADP. The sequence is that of NAD kinase from Escherichia coli O7:K1 (strain IAI39 / ExPEC).